The primary structure comprises 503 residues: Carboxyl-terminal PDZ ligand of neuronal nitric oxide synthase protein (503 aa).

Positions 26 to 191 constitute a PID domain; it reads FQHGISFEAK…ESERNSDGSG (166 aa). Positions 170-212 are disordered; that stretch reads HTQQNADGQEDGESERNSDGSGDPGRQLTGAERVSTATAEETD. 4 positions are modified to phosphoserine: serine 183, serine 187, serine 190, and serine 262. The disordered stretch occupies residues 266–285; that stretch reads LLPSSSSSKPPGLGTGTPLS. A coiled-coil region spans residues 319–360; it reads AAEAAARLEAQARVHQLLLQNKDMLQHISLLVKQVQELELKL. A phosphoserine mark is found at serine 368, serine 371, serine 398, and serine 414. Residues 491-503 are interaction with NOS1; that stretch reads QELGDSLDDEIAV. Positions 501-503 match the PDZ-binding motif; that stretch reads IAV.

In terms of assembly, interacts with the PDZ domain of NOS1 or the second PDZ domain of DLG4 through its C-terminus. Interacts with RASD1 and SYN1, SYN2 and SYN3 via its PID domain. Forms a ternary complex with NOS1 and RASD1. Forms a ternary complex with NOS1 and SYN1. As to expression, mainly expressed in brain. Highly expressed in accessory olfactory bulb, caudate-putamen, cerebellum, cerebral cortex, dentate gyrus of the hippocampus, islands of Calleja, olfactory bulb and supraoptic nucleus. Expressed in kidney glomeruli podocytes (at protein level).

The protein localises to the cell projection. Its subcellular location is the filopodium. The protein resides in the podosome. In terms of biological role, adapter protein involved in neuronal nitric-oxide (NO) synthesis regulation via its association with nNOS/NOS1. The complex formed with NOS1 and synapsins is necessary for specific NO and synapsin functions at a presynaptic level. Mediates an indirect interaction between NOS1 and RASD1 leading to enhance the ability of NOS1 to activate RASD1. Competes with DLG4 for interaction with NOS1, possibly affecting NOS1 activity by regulating the interaction between NOS1 and DLG4. In kidney podocytes, plays a role in podosomes and filopodia formation through CDC42 activation. The sequence is that of Carboxyl-terminal PDZ ligand of neuronal nitric oxide synthase protein from Rattus norvegicus (Rat).